The following is a 375-amino-acid chain: MAAIKYQVIKKDARTKARLGILETPHGVIETPVFMPVGTQATVKAMTPDELKEMGATIILGNTYHLYLRPGHKIIEKAGGLHKFMNWDRAILTDSGGFQVFSLSSLRKITEDGVEFRSHIDGSKHFFTPEKVIEIQNSLGSDIIMSFDECAPYPADYDYVKRSMELTIKWAKRGKKAHKNTDRQALFGIVQGGTYKDLRRECAERLVDMDFPGYAIGGLSVGEPKDLMYEIIDFTTDYLPHDKPRYLMGVGTPEDLIEGVIRGVDMFDCVLPTRIARNGTVFTSRGKLIVRDAPYAEDFSPLDEECDCYTCKNYSRAYLRHLFKAKEILAARLATYHNLYFLIKLMEKIREAIRQDRLLEFKEEFLKKYYGNREE.

The active-site Proton acceptor is the aspartate 94. Substrate is bound by residues 94-98 (DSGGF), aspartate 148, glutamine 191, and glycine 218. An RNA binding region spans residues 249–255 (GVGTPED). Aspartate 268 (nucleophile) is an active-site residue. The tract at residues 273 to 277 (TRIAR) is RNA binding; important for wobble base 34 recognition. Residues cysteine 306, cysteine 308, cysteine 311, and histidine 337 each contribute to the Zn(2+) site.

Belongs to the queuine tRNA-ribosyltransferase family. In terms of assembly, homodimer. Within each dimer, one monomer is responsible for RNA recognition and catalysis, while the other monomer binds to the replacement base PreQ1. The cofactor is Zn(2+).

It catalyses the reaction 7-aminomethyl-7-carbaguanine + guanosine(34) in tRNA = 7-aminomethyl-7-carbaguanosine(34) in tRNA + guanine. It participates in tRNA modification; tRNA-queuosine biosynthesis. Its function is as follows. Catalyzes the base-exchange of a guanine (G) residue with the queuine precursor 7-aminomethyl-7-deazaguanine (PreQ1) at position 34 (anticodon wobble position) in tRNAs with GU(N) anticodons (tRNA-Asp, -Asn, -His and -Tyr). Catalysis occurs through a double-displacement mechanism. The nucleophile active site attacks the C1' of nucleotide 34 to detach the guanine base from the RNA, forming a covalent enzyme-RNA intermediate. The proton acceptor active site deprotonates the incoming PreQ1, allowing a nucleophilic attack on the C1' of the ribose to form the product. After dissociation, two additional enzymatic reactions on the tRNA convert PreQ1 to queuine (Q), resulting in the hypermodified nucleoside queuosine (7-(((4,5-cis-dihydroxy-2-cyclopenten-1-yl)amino)methyl)-7-deazaguanosine). The polypeptide is Queuine tRNA-ribosyltransferase (Caldanaerobacter subterraneus subsp. tengcongensis (strain DSM 15242 / JCM 11007 / NBRC 100824 / MB4) (Thermoanaerobacter tengcongensis)).